Reading from the N-terminus, the 474-residue chain is ATP synthase subunit beta (474 aa).

151-158 (GGAGVGKT) is an ATP binding site.

Belongs to the ATPase alpha/beta chains family. As to quaternary structure, F-type ATPases have 2 components, CF(1) - the catalytic core - and CF(0) - the membrane proton channel. CF(1) has five subunits: alpha(3), beta(3), gamma(1), delta(1), epsilon(1). CF(0) has three main subunits: a(1), b(2) and c(9-12). The alpha and beta chains form an alternating ring which encloses part of the gamma chain. CF(1) is attached to CF(0) by a central stalk formed by the gamma and epsilon chains, while a peripheral stalk is formed by the delta and b chains.

The protein resides in the cell inner membrane. It carries out the reaction ATP + H2O + 4 H(+)(in) = ADP + phosphate + 5 H(+)(out). Its function is as follows. Produces ATP from ADP in the presence of a proton gradient across the membrane. The catalytic sites are hosted primarily by the beta subunits. This Paracoccus denitrificans (strain Pd 1222) protein is ATP synthase subunit beta.